The following is a 160-amino-acid chain: NADH-quinone oxidoreductase subunit B (160 aa).

[4Fe-4S] cluster contacts are provided by Cys-37, Cys-38, Cys-102, and Cys-132.

The protein belongs to the complex I 20 kDa subunit family. As to quaternary structure, NDH-1 is composed of 14 different subunits. Subunits NuoB, C, D, E, F, and G constitute the peripheral sector of the complex. It depends on [4Fe-4S] cluster as a cofactor.

It localises to the cell membrane. The catalysed reaction is a quinone + NADH + 5 H(+)(in) = a quinol + NAD(+) + 4 H(+)(out). NDH-1 shuttles electrons from NADH, via FMN and iron-sulfur (Fe-S) centers, to quinones in the respiratory chain. Couples the redox reaction to proton translocation (for every two electrons transferred, four hydrogen ions are translocated across the cytoplasmic membrane), and thus conserves the redox energy in a proton gradient. This chain is NADH-quinone oxidoreductase subunit B, found in Polynucleobacter asymbioticus (strain DSM 18221 / CIP 109841 / QLW-P1DMWA-1) (Polynucleobacter necessarius subsp. asymbioticus).